Consider the following 387-residue polypeptide: Phosphoglycerate kinase (387 aa).

Substrate is bound by residues D21 to N23, R36, H59 to R62, R113, and R146. ATP contacts are provided by residues K197, E314, and G340 to T343.

Belongs to the phosphoglycerate kinase family. Monomer.

Its subcellular location is the cytoplasm. It catalyses the reaction (2R)-3-phosphoglycerate + ATP = (2R)-3-phospho-glyceroyl phosphate + ADP. It participates in carbohydrate degradation; glycolysis; pyruvate from D-glyceraldehyde 3-phosphate: step 2/5. The chain is Phosphoglycerate kinase from Pseudomonas entomophila (strain L48).